The primary structure comprises 283 residues: Peroxisomal protein 2 (283 aa).

The short motif at Val281–Leu283 is the Peroxisomal target signal 1 (PTS1) element.

The protein belongs to the PXP2 family.

It is found in the peroxisome matrix. The protein resides in the cytoplasm. Its subcellular location is the cytosol. Its function is as follows. Probably involved in peroxisome formation or maintenance as well as in amino acid metabolism. This is Peroxisomal protein 2 from Saccharomyces cerevisiae (strain ATCC 204508 / S288c) (Baker's yeast).